The chain runs to 207 residues: Suppressor of IKBKE 1 (207 aa).

Coiled-coil stretches lie at residues 4–32 (TIDK…LIDQ) and 154–193 (DAIQ…SLHS). The interval 186-207 (TSKESLHSSKRESEWNFSEKTQ) is disordered. A compositionally biased stretch (basic and acidic residues) spans 189-199 (ESLHSSKRESE).

It belongs to the SIKE family. In terms of assembly, interacts with IKBKE and TBK1 via its coiled coil region. Interaction with TBK1 is disrupted upon viral infection or TLR3 stimulation. Interacts with CDC42BPB. Associates with the STRIPAK core complex composed of PP2A catalytic and scaffolding subunits, the striatins (PP2A regulatory subunits), the striatin-associated proteins MOB4, STRIP1 and STRIP2, PDCD10 and members of the STE20 kinases, such as STK24 and STK26.

Functionally, suppressor of IKK-epsilon. Associates with the striatin-interacting phosphatase and kinase (STRIPAK) core complex, forming the extended (SIKE1:SLMAP)STRIPAK complex. The (SIKE1:SLMAP)STRIPAK complex dephosphorylates STK3 leading to the inhibition of Hippo signaling and the control of cell growth. The sequence is that of Suppressor of IKBKE 1 (sike1) from Xenopus tropicalis (Western clawed frog).